Consider the following 267-residue polypeptide: Dihydropteroate synthase (267 aa).

The 251-residue stretch at 1-251 (MTKTKIIGIL…NVDLNVKLAQ (251 aa)) folds into the Pterin-binding domain. Asn11 contacts Mg(2+). (7,8-dihydropterin-6-yl)methyl diphosphate-binding positions include Thr51, Asp84, Asn103, Asp167, Lys203, and 239–241 (RVH).

Belongs to the DHPS family. The cofactor is Mg(2+).

It carries out the reaction (7,8-dihydropterin-6-yl)methyl diphosphate + 4-aminobenzoate = 7,8-dihydropteroate + diphosphate. It functions in the pathway cofactor biosynthesis; tetrahydrofolate biosynthesis; 7,8-dihydrofolate from 2-amino-4-hydroxy-6-hydroxymethyl-7,8-dihydropteridine diphosphate and 4-aminobenzoate: step 1/2. Functionally, catalyzes the condensation of para-aminobenzoate (pABA) with 6-hydroxymethyl-7,8-dihydropterin diphosphate (DHPt-PP) to form 7,8-dihydropteroate (H2Pte), the immediate precursor of folate derivatives. The polypeptide is Dihydropteroate synthase (folP) (Staphylococcus haemolyticus).